Reading from the N-terminus, the 248-residue chain is Cobalt transport protein CbiM (248 aa).

The first 31 residues, 1–31 (MLKVIKKYRKFITFLMIGLVYTLAYPATAHA), serve as a signal peptide directing secretion. 6 helical membrane-spanning segments follow: residues 39–59 (LPPRWCIFWYAVSLPFFIYGL), 75–95 (VMLALCGAFVFVLSSLKLPSV), 107–127 (LGTVLFGPGVMSVLGVIVLLF), 139–159 (TLGANEFSMTIVGPIVGYAVW), 173–195 (LFLCAMFADWSTYVTTAFQLAIV), and 213–233 (IYAITQIPLAIAEGLLTVIVY).

Belongs to the CbiM family. As to quaternary structure, forms an energy-coupling factor (ECF) transporter complex composed of an ATP-binding protein (A component, CbiO), a transmembrane protein (T component, CbiQ) and 2 possible substrate-capture proteins (S components, CbiM and CbiN) of unknown stoichimetry.

It is found in the cell membrane. The protein operates within cofactor biosynthesis; adenosylcobalamin biosynthesis. In terms of biological role, part of the energy-coupling factor (ECF) transporter complex CbiMNOQ involved in cobalt import. The protein is Cobalt transport protein CbiM of Limosilactobacillus reuteri (strain DSM 20016) (Lactobacillus reuteri).